A 930-amino-acid chain; its full sequence is Zn(2)-C6 fungal-type transcription factor FTF1c (930 aa).

A DNA-binding region (zn(2)-C6 fungal-type) is located at residues Cys-137 to Cys-164.

The protein localises to the nucleus. Its function is as follows. Zn(2)-C6 fungal-type transcription factor that has a role in the establishment of the fungus within the plant and/or the progress of the disease. Regulates the expression of virulence factors such as SIX1 and SIX6. The polypeptide is Zn(2)-C6 fungal-type transcription factor FTF1c (Fusarium oxysporum f. sp. lycopersici (strain 4287 / CBS 123668 / FGSC 9935 / NRRL 34936) (Fusarium vascular wilt of tomato)).